Reading from the N-terminus, the 77-residue chain is Small nuclear ribonucleoprotein G (77 aa).

In terms of domain architecture, Sm spans 4–76 (AGAPDLKKYL…VIMIETLDKM (73 aa)).

The protein belongs to the snRNP Sm proteins family. Belongs to the 40S cdc5-associated complex (or cwf complex), a spliceosome sub-complex reminiscent of a late-stage spliceosome composed of the U2, U5 and U6 snRNAs and at least brr2, cdc5, cwf2/prp3, cwf3/syf1, cwf4/syf3, cwf5/ecm2, spp42/cwf6, cwf7/spf27, cwf8, cwf9, cwf10, cwf11, cwf12, prp45/cwf13, cwf14, cwf15, cwf16, cwf17, cwf18, cwf19, cwf20, cwf21, cwf22, cwf23, cwf24, cwf25, cwf26, cyp7/cwf27, cwf28, cwf29/ist3, lea1, msl1, prp5/cwf1, prp10, prp12/sap130, prp17, prp22, sap61, sap62, sap114, sap145, slu7, smb1, smd1, smd3, smf1, smg1 and syf2.

The protein resides in the nucleus. The protein localises to the cytoplasm. Its function is as follows. Plays a role in pre-mRNA splicing as a core component of the spliceosomal U1, U2, U4 and U5 small nuclear ribonucleoproteins (snRNPs), the building blocks of the spliceosome. This chain is Small nuclear ribonucleoprotein G (smg1), found in Schizosaccharomyces pombe (strain 972 / ATCC 24843) (Fission yeast).